The sequence spans 173 residues: RNA pyrophosphohydrolase (173 aa).

The Nudix hydrolase domain maps to 13–166 (PYRPCVGLMI…KRKVYEEVVA (154 aa)). A Nudix box motif is present at residues 54 to 75 (GGIDKGEEPLQAAERELYEETG).

This sequence belongs to the Nudix hydrolase family. RppH subfamily. A divalent metal cation serves as cofactor.

Its function is as follows. Accelerates the degradation of transcripts by removing pyrophosphate from the 5'-end of triphosphorylated RNA, leading to a more labile monophosphorylated state that can stimulate subsequent ribonuclease cleavage. This is RNA pyrophosphohydrolase from Mesorhizobium japonicum (strain LMG 29417 / CECT 9101 / MAFF 303099) (Mesorhizobium loti (strain MAFF 303099)).